A 216-amino-acid chain; its full sequence is ATP-dependent Clp protease proteolytic subunit (216 aa).

The active-site Nucleophile is the S101. H126 is a catalytic residue.

The protein belongs to the peptidase S14 family. As to quaternary structure, component of the chloroplastic Clp protease core complex.

Its subcellular location is the plastid. It is found in the chloroplast stroma. It catalyses the reaction Hydrolysis of proteins to small peptides in the presence of ATP and magnesium. alpha-casein is the usual test substrate. In the absence of ATP, only oligopeptides shorter than five residues are hydrolyzed (such as succinyl-Leu-Tyr-|-NHMec, and Leu-Tyr-Leu-|-Tyr-Trp, in which cleavage of the -Tyr-|-Leu- and -Tyr-|-Trp bonds also occurs).. Functionally, cleaves peptides in various proteins in a process that requires ATP hydrolysis. Has a chymotrypsin-like activity. Plays a major role in the degradation of misfolded proteins. The polypeptide is ATP-dependent Clp protease proteolytic subunit (Triticum aestivum (Wheat)).